The following is a 451-amino-acid chain: Kynureninase (451 aa).

Pyridoxal 5'-phosphate contacts are provided by residues Leu-131, Ser-132, 159–162 (FPSD), Ser-215, Asp-244, His-247, and Tyr-269. Lys-270 is subject to N6-(pyridoxal phosphate)lysine. Pyridoxal 5'-phosphate is bound by residues Trp-303 and Asn-331.

It belongs to the kynureninase family. In terms of assembly, homodimer. Pyridoxal 5'-phosphate is required as a cofactor.

It localises to the cytoplasm. The catalysed reaction is L-kynurenine + H2O = anthranilate + L-alanine + H(+). It catalyses the reaction 3-hydroxy-L-kynurenine + H2O = 3-hydroxyanthranilate + L-alanine + H(+). The protein operates within amino-acid degradation; L-kynurenine degradation; L-alanine and anthranilate from L-kynurenine: step 1/1. It functions in the pathway cofactor biosynthesis; NAD(+) biosynthesis; quinolinate from L-kynurenine: step 2/3. Catalyzes the cleavage of L-kynurenine (L-Kyn) and L-3-hydroxykynurenine (L-3OHKyn) into anthranilic acid (AA) and 3-hydroxyanthranilic acid (3-OHAA), respectively. The chain is Kynureninase from Dictyostelium discoideum (Social amoeba).